We begin with the raw amino-acid sequence, 203 residues long: Guanylate kinase (203 aa).

Residues 3-181 form the Guanylate kinase-like domain; it reads GTLYIVAAPS…AVSEMCAIFT (179 aa). 10-17 provides a ligand contact to ATP; it reads APSGAGKS.

The protein belongs to the guanylate kinase family.

It is found in the cytoplasm. It catalyses the reaction GMP + ATP = GDP + ADP. Its function is as follows. Essential for recycling GMP and indirectly, cGMP. This Xanthomonas campestris pv. campestris (strain 8004) protein is Guanylate kinase.